The sequence spans 393 residues: Acetylornithine aminotransferase (393 aa).

Pyridoxal 5'-phosphate-binding positions include 100 to 101 (GT) and Phe132. Position 135 (Arg135) interacts with N(2)-acetyl-L-ornithine. 217 to 220 (DEIQ) is a pyridoxal 5'-phosphate binding site. An N6-(pyridoxal phosphate)lysine modification is found at Lys246. Position 275 (Ser275) interacts with N(2)-acetyl-L-ornithine. A pyridoxal 5'-phosphate-binding site is contributed by Thr276.

The protein belongs to the class-III pyridoxal-phosphate-dependent aminotransferase family. ArgD subfamily. Homodimer. It depends on pyridoxal 5'-phosphate as a cofactor.

It localises to the cytoplasm. It catalyses the reaction N(2)-acetyl-L-ornithine + 2-oxoglutarate = N-acetyl-L-glutamate 5-semialdehyde + L-glutamate. It functions in the pathway amino-acid biosynthesis; L-arginine biosynthesis; N(2)-acetyl-L-ornithine from L-glutamate: step 4/4. The chain is Acetylornithine aminotransferase from Campylobacter jejuni subsp. jejuni serotype O:2 (strain ATCC 700819 / NCTC 11168).